The following is a 644-amino-acid chain: Low affinity sulfate transporter 3 (644 aa).

Residues 1 to 19 show a composition bias toward polar residues; the sequence is MSSLGTEQFSERSQWVLNS. Positions 1 to 20 are disordered; it reads MSSLGTEQFSERSQWVLNSP. The next 13 membrane-spanning stretches (helical) occupy residues 50–70, 76–96, 99–119, 124–144, 156–176, 179–199, 242–262, 268–288, 328–348, 394–414, 418–438, 455–475, and 518–538; these read AVSF…YSAT, LLSG…YANL, LDPQ…ALMG, IAIG…PKVI, LVFT…VLRL, LVDF…AIVI, PLNF…RFIG, FFWL…LIVF, IGLI…RSFA, CKTA…LELF, LYYT…PGLI, LACL…GLLI, and PGIL…AGFV. An STAS domain is found at 511–635; that stretch reads YPMAVTTPGI…LTVAEAVDAC (125 aa).

This sequence belongs to the SLC26A/SulP transporter (TC 2.A.53) family.

It localises to the membrane. In terms of biological role, low-affinity H(+)/sulfate cotransporter which may be involved in the internal transport of sulfate between cellular or subcellular compartments within the plant. In Stylosanthes hamata (Caribbean stylo), this protein is Low affinity sulfate transporter 3 (ST3).